The following is a 374-amino-acid chain: DNA integrity scanning protein DisA (374 aa).

The region spanning 20–158 is the DAC domain; sequence EALMRASLSA…DGERRVLEES (139 aa). ATP contacts are provided by residues Gly87, Leu105, and 118 to 122; that span reads TRHRT.

Belongs to the DisA family. As to quaternary structure, homooctamer. The cofactor is Mg(2+).

It carries out the reaction 2 ATP = 3',3'-c-di-AMP + 2 diphosphate. Functionally, participates in a DNA-damage check-point that is active prior to asymmetric division when DNA is damaged. DisA forms globular foci that rapidly scan along the chromosomes during sporulation, searching for lesions. When a lesion is present, DisA pauses at the lesion site. This triggers a cellular response that culminates in a temporary block in sporulation initiation. Its function is as follows. Also has diadenylate cyclase activity, catalyzing the condensation of 2 ATP molecules into cyclic di-AMP (c-di-AMP). c-di-AMP acts as a signaling molecule that couples DNA integrity with progression of sporulation. The rise in c-di-AMP level generated by DisA while scanning the chromosome, operates as a positive signal that advances sporulation; upon encountering a lesion, the DisA focus arrests at the damaged site and halts c-di-AMP synthesis. The sequence is that of DNA integrity scanning protein DisA from Streptomyces griseus subsp. griseus (strain JCM 4626 / CBS 651.72 / NBRC 13350 / KCC S-0626 / ISP 5235).